Consider the following 158-residue polypeptide: MFRIGQGYDVHQLVEGRPLILGGVDIPHDKGLLGHSDADALLHAITDALLGAAALGDIGRHFPDTAAEFKGADSRALLREAAARVRAAGWRPVNVDSTLIAQRPKLAPHIDAMRANIAADLGLDVGAVNVKGKTNEKLGYLGRCEAIEAQAVCLLAQA.

Residues aspartate 9 and histidine 11 each contribute to the a divalent metal cation site. Residues aspartate 9–histidine 11 and histidine 35–serine 36 each bind 4-CDP-2-C-methyl-D-erythritol 2-phosphate. Residue histidine 43 coordinates a divalent metal cation. Residues aspartate 57–glycine 59 and arginine 143 each bind 4-CDP-2-C-methyl-D-erythritol 2-phosphate.

This sequence belongs to the IspF family. As to quaternary structure, homotrimer. The cofactor is a divalent metal cation.

The catalysed reaction is 4-CDP-2-C-methyl-D-erythritol 2-phosphate = 2-C-methyl-D-erythritol 2,4-cyclic diphosphate + CMP. The protein operates within isoprenoid biosynthesis; isopentenyl diphosphate biosynthesis via DXP pathway; isopentenyl diphosphate from 1-deoxy-D-xylulose 5-phosphate: step 4/6. Involved in the biosynthesis of isopentenyl diphosphate (IPP) and dimethylallyl diphosphate (DMAPP), two major building blocks of isoprenoid compounds. Catalyzes the conversion of 4-diphosphocytidyl-2-C-methyl-D-erythritol 2-phosphate (CDP-ME2P) to 2-C-methyl-D-erythritol 2,4-cyclodiphosphate (ME-CPP) with a corresponding release of cytidine 5-monophosphate (CMP). This is 2-C-methyl-D-erythritol 2,4-cyclodiphosphate synthase from Chromobacterium violaceum (strain ATCC 12472 / DSM 30191 / JCM 1249 / CCUG 213 / NBRC 12614 / NCIMB 9131 / NCTC 9757 / MK).